Reading from the N-terminus, the 468-residue chain is Glycine--tRNA ligase (468 aa).

Substrate-binding residues include Arg-101 and Glu-170. ATP-binding positions include 202–204 (RNE), 212–217 (FRTREF), 289–290 (EL), and 333–336 (GLTR). Residue 217-221 (FEQME) participates in substrate binding. Substrate is bound at residue 329–333 (EPAAG).

This sequence belongs to the class-II aminoacyl-tRNA synthetase family. Homodimer.

It localises to the cytoplasm. It carries out the reaction tRNA(Gly) + glycine + ATP = glycyl-tRNA(Gly) + AMP + diphosphate. Its function is as follows. Catalyzes the attachment of glycine to tRNA(Gly). The chain is Glycine--tRNA ligase from Mycolicibacterium vanbaalenii (strain DSM 7251 / JCM 13017 / BCRC 16820 / KCTC 9966 / NRRL B-24157 / PYR-1) (Mycobacterium vanbaalenii).